The chain runs to 453 residues: Phosphoglucosamine mutase (453 aa).

The active-site Phosphoserine intermediate is the Ser110. Mg(2+) is bound by residues Ser110, Asp247, Asp249, and Asp251. Ser110 bears the Phosphoserine mark.

It belongs to the phosphohexose mutase family. Requires Mg(2+) as cofactor. Activated by phosphorylation.

It catalyses the reaction alpha-D-glucosamine 1-phosphate = D-glucosamine 6-phosphate. Functionally, catalyzes the conversion of glucosamine-6-phosphate to glucosamine-1-phosphate. The protein is Phosphoglucosamine mutase of Tropheryma whipplei (strain TW08/27) (Whipple's bacillus).